A 541-amino-acid chain; its full sequence is ATP synthase subunit alpha (541 aa).

169-176 (GDRQTGKT) contributes to the ATP binding site. The disordered stretch occupies residues 506–541 (NTLLNVEEGDTGEEENNEGHNKAEQDTEEKDTEEVV). Composition is skewed to acidic residues over residues 512 to 521 (EEGDTGEEEN) and 531 to 541 (DTEEKDTEEVV).

Belongs to the ATPase alpha/beta chains family. In terms of assembly, F-type ATPases have 2 components, CF(1) - the catalytic core - and CF(0) - the membrane proton channel. CF(1) has five subunits: alpha(3), beta(3), gamma(1), delta(1), epsilon(1). CF(0) has three main subunits: a(1), b(2) and c(9-12). The alpha and beta chains form an alternating ring which encloses part of the gamma chain. CF(1) is attached to CF(0) by a central stalk formed by the gamma and epsilon chains, while a peripheral stalk is formed by the delta and b chains.

The protein resides in the cell inner membrane. It catalyses the reaction ATP + H2O + 4 H(+)(in) = ADP + phosphate + 5 H(+)(out). In terms of biological role, produces ATP from ADP in the presence of a proton gradient across the membrane. The alpha chain is a regulatory subunit. This Halothermothrix orenii (strain H 168 / OCM 544 / DSM 9562) protein is ATP synthase subunit alpha.